Consider the following 404-residue polypeptide: Argininosuccinate synthase (404 aa).

ATP is bound at residue 9–17; sequence AYSGGLDTS. Residue tyrosine 86 coordinates L-citrulline. Glycine 116 is an ATP binding site. Residues threonine 118, asparagine 122, and aspartate 123 each contribute to the L-aspartate site. Asparagine 122 contributes to the L-citrulline binding site. Residues arginine 126, serine 174, serine 183, glutamate 259, and tyrosine 271 each coordinate L-citrulline.

Belongs to the argininosuccinate synthase family. Type 1 subfamily. As to quaternary structure, homotetramer.

It is found in the cytoplasm. It catalyses the reaction L-citrulline + L-aspartate + ATP = 2-(N(omega)-L-arginino)succinate + AMP + diphosphate + H(+). It participates in amino-acid biosynthesis; L-arginine biosynthesis; L-arginine from L-ornithine and carbamoyl phosphate: step 2/3. The sequence is that of Argininosuccinate synthase from Listeria monocytogenes serotype 4b (strain CLIP80459).